The primary structure comprises 200 residues: 3-isopropylmalate dehydratase small subunit (200 aa).

Belongs to the LeuD family. LeuD type 1 subfamily. As to quaternary structure, heterodimer of LeuC and LeuD.

It catalyses the reaction (2R,3S)-3-isopropylmalate = (2S)-2-isopropylmalate. It participates in amino-acid biosynthesis; L-leucine biosynthesis; L-leucine from 3-methyl-2-oxobutanoate: step 2/4. In terms of biological role, catalyzes the isomerization between 2-isopropylmalate and 3-isopropylmalate, via the formation of 2-isopropylmaleate. The chain is 3-isopropylmalate dehydratase small subunit from Actinobacillus pleuropneumoniae serotype 3 (strain JL03).